Consider the following 73-residue polypeptide: Conotoxin im23b (73 aa).

Residues 1–22 (MIMRMTLTLFVLVVMTAASASG) form the signal peptide. A propeptide spanning residues 23–28 (DALTEA) is cleaved from the precursor. Intrachain disulfides connect C34/C41, C45/C55, and C56/C71.

Belongs to the conotoxin K superfamily. In terms of tissue distribution, expressed by the venom duct.

It is found in the secreted. Neurotoxin that induces excitatory symptoms in mice following intracranial administration. No symptoms are observed after intraperitoneal and intravenous (tail vein) injections. The polypeptide is Conotoxin im23b (Conus imperialis (Imperial cone)).